The sequence spans 282 residues: E3 ubiquitin-protein ligase SIAH1 (282 aa).

Over residues 1–17 (MSRQTATALPTGTSKCP) the composition is skewed to polar residues. The interval 1-22 (MSRQTATALPTGTSKCPPSQRV) is disordered. At Ser-19 the chain carries Phosphoserine; by ATM and ATR. The segment at 41–76 (CPVCFDYVLPPILQCQSGHLVCSNCRPKLTCCPTCR) adopts an RING-type zinc-finger fold. Positions 90-282 (VANSVLFPCK…LGINVTISMC (193 aa)) are SBD. Residues 93-153 (SVLFPCKYAS…VMPHLMHQHK (61 aa)) form an SIAH-type zinc finger. Cys-98, Cys-105, His-117, Cys-121, Cys-128, Cys-135, His-147, and His-152 together coordinate Zn(2+).

It belongs to the SINA (Seven in absentia) family. In terms of assembly, homodimer. Component of some large E3 complex composed of UBE2D1, SIAH1, CACYBP/SIP, SKP1, APC and TBL1X. Interacts with UBE2I. Interacts with alpha-tubulin. Interacts with PEG10, which may inhibit its activity. Interacts with PEG3 and HIPK2. Interacts with group 1 glutamate receptors GRM1 and GRM5. Interacts with DAB1, which may inhibit its activity. Interacts with UBE2E2. Interacts with SNCAIP. Interacts with HIPK2; the interaction is promoted by DAZAP2 and results in SIAH1-mediated ubiquitination and subsequent proteasomal degradation of HIPK2. Interacts with DAZAP2; the interaction is decreased following phosphorylation of DAZAP2 by HIPK2. Interacts with GAPDH; leading to stabilize SIAH1. Interacts with Bassoon/BSN and Piccolo/PLCO; these interactions negatively regulate SIAH1 E3 ligase activity. Interacts with DCC. Interacts with AXIN1; catalyzes AXIN1 ubiquitination and subsequent proteasome-mediated ubiquitin-dependent degradation. In terms of processing, phosphorylated on Ser-19 by ATM and ATR. This phosphorylation disrupts SIAH1 interaction with HIPK2, and subsequent proteasomal degradation of HIPK2.

The protein localises to the cytoplasm. The protein resides in the nucleus. The enzyme catalyses S-ubiquitinyl-[E2 ubiquitin-conjugating enzyme]-L-cysteine + [acceptor protein]-L-lysine = [E2 ubiquitin-conjugating enzyme]-L-cysteine + N(6)-ubiquitinyl-[acceptor protein]-L-lysine.. It participates in protein modification; protein ubiquitination. Its function is as follows. E3 ubiquitin-protein ligase that mediates ubiquitination and subsequent proteasomal degradation of target proteins. E3 ubiquitin ligases accept ubiquitin from an E2 ubiquitin-conjugating enzyme in the form of a thioester and then directly transfers the ubiquitin to targeted substrates. Mediates E3 ubiquitin ligase activity either through direct binding to substrates or by functioning as the essential RING domain subunit of larger E3 complexes. Triggers the ubiquitin-mediated degradation of many substrates, including proteins involved in transcription regulation (ELL2, MYB, POU2AF1, PML and RBBP8), a cell surface receptor (DCC), cytoplasmic signal transduction molecules (KLF10/TIEG1 and NUMB), an antiapoptotic protein (BAG1), a microtubule motor protein (KIF22), a protein involved in synaptic vesicle function in neurons (SYP), a structural protein (CTNNB1) and SNCAIP. Confers constitutive instability to HIPK2 through proteasomal degradation. It is thereby involved in many cellular processes such as apoptosis, tumor suppression, cell cycle, axon guidance, transcription, spermatogenesis and TNF-alpha signaling. Has some overlapping function with SIAH2. Induces apoptosis in cooperation with PEG3. Upon nitric oxid (NO) generation that follows apoptotic stimulation, interacts with S-nitrosylated GAPDH, mediating the translocation of GAPDH to the nucleus. GAPDH acts as a stabilizer of SIAH1, facilitating the degradation of nuclear proteins. Mediates ubiquitination and degradation of EGLN2 and EGLN3 in response to the unfolded protein response (UPR), leading to their degradation and subsequent stabilization of ATF4. Also part of the Wnt signaling pathway in which it mediates the Wnt-induced ubiquitin-mediated proteasomal degradation of AXIN1. The polypeptide is E3 ubiquitin-protein ligase SIAH1 (Siah1) (Rattus norvegicus (Rat)).